The primary structure comprises 118 residues: UPF0295 protein BCG9842_B4782 (118 aa).

2 helical membrane passes run 12 to 32 (IRTF…LGVF) and 43 to 63 (FMMV…WIGM).

The protein belongs to the UPF0295 family.

Its subcellular location is the cell membrane. The chain is UPF0295 protein BCG9842_B4782 from Bacillus cereus (strain G9842).